The primary structure comprises 171 residues: uncharacterized protein (171 aa).

The interval 123 to 171 is disordered; sequence CTKRDLRNDPPPAYQPDDPLKDLRKNFEKKEKPTWNDVEKKKNGVFEFH. Basic and acidic residues predominate over residues 140–171; it reads DPLKDLRKNFEKKEKPTWNDVEKKKNGVFEFH.

This is an uncharacterized protein from Caenorhabditis elegans.